Here is a 189-residue protein sequence, read N- to C-terminus: Peroxiredoxin sll1621 (189 aa).

Positions 2–177 (TPERVPSVVF…MLAYLKGAEA (176 aa)) constitute a Thioredoxin domain. The active-site Cysteine sulfenic acid (-SOH) intermediate (for peroxiredoxin activity) is the Cys-55.

The protein belongs to the peroxiredoxin family. Prx5 subfamily. Monomer.

The catalysed reaction is a hydroperoxide + 2 glutathione = an alcohol + glutathione disulfide + H2O. In terms of biological role, thiol-specific peroxidase that catalyzes the reduction of hydrogen peroxide and organic hydroperoxides to water and alcohols, respectively. Plays a role in cell protection against oxidative stress by detoxifying peroxides. This is Peroxiredoxin sll1621 from Synechocystis sp. (strain ATCC 27184 / PCC 6803 / Kazusa).